Here is a 149-residue protein sequence, read N- to C-terminus: Small ribosomal subunit protein eS19 (149 aa).

The protein belongs to the eukaryotic ribosomal protein eS19 family.

This Mya arenaria (Soft-shell clam) protein is Small ribosomal subunit protein eS19 (RPS19).